We begin with the raw amino-acid sequence, 294 residues long: Probable ABC transporter permease protein YqgI (294 aa).

Transmembrane regions (helical) follow at residues 14-34 (FGLC…YIII), 66-86 (FYIL…GGVF), 99-121 (FIRT…FGLL), 126-148 (LTGW…LPVM), 190-210 (IITG…ALLF), and 260-280 (AIAN…NLAA). An ABC transmembrane type-1 domain is found at 62–280 (LFNSFYILFI…ISVLVFNLAA (219 aa)).

It belongs to the binding-protein-dependent transport system permease family. CysTW subfamily.

It localises to the cell membrane. Functionally, part of the binding-protein-dependent transport system YqgGHIJK. Probably responsible for the translocation of the substrate across the membrane. This is Probable ABC transporter permease protein YqgI (yqgI) from Bacillus subtilis (strain 168).